A 359-amino-acid polypeptide reads, in one-letter code: Peptide chain release factor 1 (359 aa).

The residue at position 235 (glutamine 235) is an N5-methylglutamine. Basic and acidic residues predominate over residues 283–294; sequence SKADEERSESRK. A disordered region spans residues 283–309; sequence SKADEERSESRKSQVGSGDRSERIRTY.

This sequence belongs to the prokaryotic/mitochondrial release factor family. In terms of processing, methylated by PrmC. Methylation increases the termination efficiency of RF1.

Its subcellular location is the cytoplasm. Its function is as follows. Peptide chain release factor 1 directs the termination of translation in response to the peptide chain termination codons UAG and UAA. In Mesorhizobium japonicum (strain LMG 29417 / CECT 9101 / MAFF 303099) (Mesorhizobium loti (strain MAFF 303099)), this protein is Peptide chain release factor 1.